Here is a 396-residue protein sequence, read N- to C-terminus: Putative protein IntB (396 aa).

Residues 71–151 (RTFKEVAIEW…RTTAIMRYAV (81 aa)) enclose the Core-binding (CB) domain. Positions 174-367 (QHRPALELKR…EHLEERRLML (194 aa)) constitute a Tyr recombinase domain. Active-site residues include R213, K252, H316, R319, and H343. Residue Y353 is the O-(3'-phospho-DNA)-tyrosine intermediate of the active site.

This sequence belongs to the 'phage' integrase family.

The chain is Putative protein IntB (intB) from Escherichia coli (strain K12).